The sequence spans 62 residues: Alpha-conotoxin ViIA (62 aa).

The first 18 residues, 1–18 (MGMRMMFVVFLLVVFASS), serve as a signal peptide directing secretion. Residues 19-45 (VTLDRASYGRYASPVDRASALIAQAIL) constitute a propeptide that is removed on maturation. 2 disulfide bridges follow: cysteine 48–cysteine 54 and cysteine 49–cysteine 61.

It belongs to the conotoxin A superfamily. In terms of processing, the toxin is inactive on the alpha-3-beta-2 nAChR when the disulfide bond connectivity is C1-C4 and C2-C3 (ViIA-I) (IC(50)&gt;10000 nM). As to expression, expressed by the venom duct.

It is found in the secreted. Alpha-conotoxins act on postsynaptic membranes, they bind to the nicotinic acetylcholine receptors (nAChR) and thus inhibit them. This toxin selectively inhibits nicotinic acetylcholine receptor (nAChR) alpha-3-beta-2 subtype (IC(50)=845.5 nM). This chain is Alpha-conotoxin ViIA, found in Conus virgo (Virgin cone).